The chain runs to 228 residues: UPF0758 protein Gura_4138 (228 aa).

The MPN domain occupies 106-228 (RFTSPSQVFE…FLSFVDRGMM (123 aa)). His177, His179, and Asp190 together coordinate Zn(2+). The JAMM motif signature appears at 177-190 (HNHPTGDPTPSRED).

Belongs to the UPF0758 family.

The sequence is that of UPF0758 protein Gura_4138 from Geotalea uraniireducens (strain Rf4) (Geobacter uraniireducens).